The primary structure comprises 237 residues: Sugar fermentation stimulation protein homolog (237 aa).

Belongs to the SfsA family.

This Pseudomonas putida (strain GB-1) protein is Sugar fermentation stimulation protein homolog.